A 429-amino-acid polypeptide reads, in one-letter code: Zinc finger protein 275 (429 aa).

The disordered stretch occupies residues 31-95; it reads VSDPSPNTDP…DGKRGSPQNL (65 aa). The segment covering 34-51 has biased composition (polar residues); sequence PSPNTDPAKYSESTSATR. A Phosphoserine modification is found at S76. Residues 79–89 show a composition bias toward basic and acidic residues; the sequence is FRQHGDSDGKR. 2 C2H2-type zinc fingers span residues 101-123 and 129-151; these read FACK…QRVH and WECG…RKSH. A disordered region spans residues 149-176; sequence KSHVAAEPQPGPSRALENAAEKREQMER. Residues 167–176 are compositionally biased toward basic and acidic residues; the sequence is AAEKREQMER. 9 C2H2-type zinc fingers span residues 181 to 203, 209 to 231, 237 to 259, 265 to 287, 293 to 315, 321 to 343, 349 to 371, 377 to 399, and 405 to 427; these read FECE…LRVH, FDCE…QKLH, FACK…QRMH, FDCD…QRIH, YGCP…RRIH, YACG…ARIH, YACG…RRIH, YECD…RRIH, and CECS…QPTH.

It belongs to the krueppel C2H2-type zinc-finger protein family.

Its subcellular location is the nucleus. May be involved in transcriptional regulation. The chain is Zinc finger protein 275 (ZNF275) from Homo sapiens (Human).